A 300-amino-acid polypeptide reads, in one-letter code: Cation-efflux pump FieF (300 aa).

4 helical membrane-spanning segments follow: residues 12-32, 40-60, 82-102, and 114-134; these read AALS…FAWW, LAAL…LFVV, AALA…LTGF, and PSIG…LVTF. Zn(2+)-binding residues include aspartate 45 and aspartate 49. Positions 153 and 157 each coordinate Zn(2+). The next 2 helical transmembrane spans lie at 155-175 and 178-198; these read QSDV…WYGF and ADAL…LRMG.

The protein belongs to the cation diffusion facilitator (CDF) transporter (TC 2.A.4) family. FieF subfamily. Homodimer.

The protein localises to the cell inner membrane. The enzyme catalyses Zn(2+)(in) + H(+)(out) = Zn(2+)(out) + H(+)(in). The catalysed reaction is Cd(2+)(in) + H(+)(out) = Cd(2+)(out) + H(+)(in). It catalyses the reaction Fe(2+)(in) + H(+)(out) = Fe(2+)(out) + H(+)(in). Its function is as follows. Divalent metal cation transporter which exports Zn(2+), Cd(2+) and possibly Fe(2+). May be involved in zinc and iron detoxification by efflux. This chain is Cation-efflux pump FieF, found in Yersinia pestis bv. Antiqua (strain Antiqua).